Reading from the N-terminus, the 610-residue chain is Myoneurin (610 aa).

Residues cysteine 24–serine 89 form the BTB domain. Positions glutamine 169–valine 197 are disordered. Short sequence motifs (nuclear localization signal) lie at residues lysine 174 to lysine 190 and lysine 257 to lysine 262. Over residues serine 188–valine 197 the composition is skewed to polar residues. At serine 289 the chain carries Phosphoserine. 8 consecutive C2H2-type zinc fingers follow at residues proline 302–histidine 324, tyrosine 330–histidine 352, tyrosine 358–histidine 381, tyrosine 387–histidine 409, tyrosine 415–histidine 437, tyrosine 443–histidine 465, tyrosine 471–histidine 493, and phenylalanine 499–histidine 522. The tract at residues valine 521–lysine 556 is disordered. A compositionally biased stretch (basic and acidic residues) spans serine 523 to serine 539. The segment covering glutamate 540–serine 550 has biased composition (polar residues).

It belongs to the krueppel C2H2-type zinc-finger protein family. Mainly expressed in the neuromuscular system. Located in and around synaptic myonuclei in adult muscle. Expression is dysregulated after nerve injury. Also found in the testis, ovary and placenta.

It is found in the nucleus. The chain is Myoneurin (MYNN) from Homo sapiens (Human).